The primary structure comprises 473 residues: UDP-N-acetylmuramate--L-alanine ligase (473 aa).

Residue 123 to 129 participates in ATP binding; it reads GSHGKTS.

This sequence belongs to the MurCDEF family.

The protein localises to the cytoplasm. It carries out the reaction UDP-N-acetyl-alpha-D-muramate + L-alanine + ATP = UDP-N-acetyl-alpha-D-muramoyl-L-alanine + ADP + phosphate + H(+). Its pathway is cell wall biogenesis; peptidoglycan biosynthesis. In terms of biological role, cell wall formation. The polypeptide is UDP-N-acetylmuramate--L-alanine ligase (Prochlorococcus marinus subsp. pastoris (strain CCMP1986 / NIES-2087 / MED4)).